The sequence spans 205 residues: GTP cyclohydrolase-2 (205 aa).

49–53 (RLHSE) serves as a coordination point for GTP. Residues C54, C65, and C67 each contribute to the Zn(2+) site. GTP is bound by residues Q70, 92–94 (EGR), and T114. The active-site Proton acceptor is D126. R128 serves as the catalytic Nucleophile. GTP-binding residues include T149 and K154.

The protein belongs to the GTP cyclohydrolase II family. Zn(2+) serves as cofactor.

The catalysed reaction is GTP + 4 H2O = 2,5-diamino-6-hydroxy-4-(5-phosphoribosylamino)-pyrimidine + formate + 2 phosphate + 3 H(+). It participates in cofactor biosynthesis; riboflavin biosynthesis; 5-amino-6-(D-ribitylamino)uracil from GTP: step 1/4. Its function is as follows. Catalyzes the conversion of GTP to 2,5-diamino-6-ribosylamino-4(3H)-pyrimidinone 5'-phosphate (DARP), formate and pyrophosphate. In Pseudomonas putida (strain ATCC 700007 / DSM 6899 / JCM 31910 / BCRC 17059 / LMG 24140 / F1), this protein is GTP cyclohydrolase-2.